The chain runs to 71 residues: Exodeoxyribonuclease 7 small subunit (71 aa).

It belongs to the XseB family. As to quaternary structure, heterooligomer composed of large and small subunits.

It is found in the cytoplasm. The catalysed reaction is Exonucleolytic cleavage in either 5'- to 3'- or 3'- to 5'-direction to yield nucleoside 5'-phosphates.. Bidirectionally degrades single-stranded DNA into large acid-insoluble oligonucleotides, which are then degraded further into small acid-soluble oligonucleotides. In Clostridium botulinum (strain 657 / Type Ba4), this protein is Exodeoxyribonuclease 7 small subunit.